We begin with the raw amino-acid sequence, 667 residues long: Protein MAIN-LIKE 2 (667 aa).

M1 is subject to N-acetylmethionine. The segment covering 492-508 has biased composition (basic residues); it reads MRGKERVRRKGMGKRRK. Disordered stretches follow at residues 492–523 and 594–667; these read MRGK…EDES and KLQE…TVVA. A compositionally biased stretch (acidic residues) spans 512–523; that stretch reads PMEDYGGSEDES. Composition is skewed to basic and acidic residues over residues 608–618 and 656–667; these read YDVKKEDKESK and SLDRRGENTVVA.

As to expression, expressed in root tips, the shoot apical meristem (SAM), leaves, mature flowers and embryos.

It localises to the nucleus. Its function is as follows. Maybe required to maintain cell division activity in meristematic cells. The chain is Protein MAIN-LIKE 2 from Arabidopsis thaliana (Mouse-ear cress).